The chain runs to 364 residues: Mannose-1-phosphate guanyltransferase (364 aa).

This sequence belongs to the transferase hexapeptide repeat family.

Its subcellular location is the cytoplasm. The catalysed reaction is alpha-D-mannose 1-phosphate + GTP + H(+) = GDP-alpha-D-mannose + diphosphate. It participates in nucleotide-sugar biosynthesis; GDP-alpha-D-mannose biosynthesis; GDP-alpha-D-mannose from alpha-D-mannose 1-phosphate (GTP route): step 1/1. Involved in cell wall synthesis where it is required for glycosylation. Involved in cell cycle progression through cell-size checkpoint. The sequence is that of Mannose-1-phosphate guanyltransferase (MPG1) from Pichia angusta (Yeast).